We begin with the raw amino-acid sequence, 187 residues long: Peptide deformylase (187 aa).

Positions 107 and 149 each coordinate Fe cation. The active site involves glutamate 150. Fe cation is bound at residue histidine 153.

The protein belongs to the polypeptide deformylase family. Fe(2+) serves as cofactor.

It carries out the reaction N-terminal N-formyl-L-methionyl-[peptide] + H2O = N-terminal L-methionyl-[peptide] + formate. In terms of biological role, removes the formyl group from the N-terminal Met of newly synthesized proteins. Requires at least a dipeptide for an efficient rate of reaction. N-terminal L-methionine is a prerequisite for activity but the enzyme has broad specificity at other positions. The sequence is that of Peptide deformylase from Synechocystis sp. (strain ATCC 27184 / PCC 6803 / Kazusa).